A 93-amino-acid chain; its full sequence is Protein E7 (93 aa).

The segment at 1 to 43 is E7 terminal domain; that stretch reads MIGKEATIPEVVLELQELVQPTADLHCYEELTEEPAEEEQCLT. An LXCXE motif; interaction with host RB1 and TMEM173/STING motif is present at residues 25–29; that stretch reads LHCYE. Residues 51–86 fold into a zinc finger; that stretch reads CGCGARLRLYVLATNLGIRAQQELLLGDIQLVCPEC. Positions 68-76 match the Nuclear export signal motif; sequence IRAQQELLL.

This sequence belongs to the papillomaviridae E7 protein family. Homodimer. Homooligomer. Interacts with host RB1; this interaction induces dissociation of RB1-E2F1 complex thereby disrupting RB1 activity. Interacts with host EP300; this interaction represses EP300 transcriptional activity. Interacts with protein E2; this interaction inhibits E7 oncogenic activity. Interacts with host TMEM173/STING; this interaction impairs the ability of TMEM173/STING to sense cytosolic DNA and promote the production of type I interferon (IFN-alpha and IFN-beta). In terms of processing, highly phosphorylated.

It is found in the host cytoplasm. It localises to the host nucleus. Its function is as follows. Plays a role in viral genome replication by driving entry of quiescent cells into the cell cycle. Stimulation of progression from G1 to S phase allows the virus to efficiently use the cellular DNA replicating machinery to achieve viral genome replication. E7 protein has both transforming and trans-activating activities. Induces the disassembly of the E2F1 transcription factor from RB1, with subsequent transcriptional activation of E2F1-regulated S-phase genes. Interferes with host histone deacetylation mediated by HDAC1 and HDAC2, leading to transcription activation. Also plays a role in the inhibition of both antiviral and antiproliferative functions of host interferon alpha. Interaction with host TMEM173/STING impairs the ability of TMEM173/STING to sense cytosolic DNA and promote the production of type I interferon (IFN-alpha and IFN-beta). The sequence is that of Protein E7 from Human papillomavirus 9.